A 319-amino-acid polypeptide reads, in one-letter code: RWD domain-containing protein 2B (319 aa).

The RWD domain maps to 41–165; it reads SELDLLASMF…EWVREHASGY (125 aa). Phosphoserine is present on serine 275.

This Pongo abelii (Sumatran orangutan) protein is RWD domain-containing protein 2B (RWDD2B).